The sequence spans 359 residues: Protein FLX-like 2 (359 aa).

The segment covering 1–16 (MESKGRIHPSHHHMRR) has biased composition (basic residues). The interval 1–27 (MESKGRIHPSHHHMRRPLPGPGGCIAH) is disordered. The stretch at 83-236 (HGSLRQELAA…EKLQAQLMNN (154 aa)) forms a coiled coil. The segment at 303-359 (TQPGYFPQRPGYNFPRGPPGSYDPTTRLPTGPYGAPFPPGPSNNTPYAGTHGNPSRR) is disordered.

Belongs to the FLX family. As to quaternary structure, interacts with FRI.

Functionally, has no transcriptional activation activity. The sequence is that of Protein FLX-like 2 (FLXL2) from Arabidopsis thaliana (Mouse-ear cress).